The primary structure comprises 555 residues: Putative protein NRT1/ PTR FAMILY 2.14 (555 aa).

A run of 12 helical transmembrane segments spans residues 62–82, 93–113, 135–155, 181–201, 209–229, 234–254, 319–339, 363–383, 405–425, 441–461, 480–500, and 523–543; these read VTLI…GAFI, IVFG…TSLV, YSQL…TGGI, FFSW…TLVL, WGIG…LLFV, YVFV…LVAA, IKSI…FLAM, LIPP…WLPF, LQKV…SGIV, VFWL…TIVG, SLLY…VSIV, and CFYY…FWCA.

Belongs to the major facilitator superfamily. Proton-dependent oligopeptide transporter (POT/PTR) (TC 2.A.17) family. As to expression, not detected.

It localises to the membrane. The sequence is that of Putative protein NRT1/ PTR FAMILY 2.14 (NPF2.14) from Arabidopsis thaliana (Mouse-ear cress).